Reading from the N-terminus, the 281-residue chain is 3-hydroxybutyryl-CoA dehydrogenase (281 aa).

This sequence belongs to the 3-hydroxyacyl-CoA dehydrogenase family.

The enzyme catalyses (3S)-3-hydroxybutanoyl-CoA + NADP(+) = acetoacetyl-CoA + NADPH + H(+). The protein operates within lipid metabolism; butanoate metabolism. The sequence is that of 3-hydroxybutyryl-CoA dehydrogenase (hbd) from Clostridioides difficile (Peptoclostridium difficile).